The following is a 311-amino-acid chain: NAD kinase (311 aa).

Residue Asp89 is the Proton acceptor of the active site. NAD(+) is bound by residues 89–90, Arg94, 163–164, Asp193, and 204–209; these read DG, NE, and TAYAFS.

This sequence belongs to the NAD kinase family. It depends on a divalent metal cation as a cofactor.

The protein localises to the cytoplasm. It catalyses the reaction NAD(+) + ATP = ADP + NADP(+) + H(+). Involved in the regulation of the intracellular balance of NAD and NADP, and is a key enzyme in the biosynthesis of NADP. Catalyzes specifically the phosphorylation on 2'-hydroxyl of the adenosine moiety of NAD to yield NADP. The sequence is that of NAD kinase from Mycobacterium leprae (strain Br4923).